The chain runs to 530 residues: MFRPVLKVRPSFSYPYSIVSSRSVRLASTATANANTAAATSTVAAHGTQETPFDFEGHFESELAKKRLDKSYRYFNNINRLAKEFPLAHRQLEDDKVTVWCSNDYLALSKNPQVLDAMRKTIDKYGAGAGGTRNIAGHNIPTMRLEAELAALHKKEGALVFSSCYVANDAVISLLGQKVKDLVIFSDELNHASMIVGIKHANRPKHIFRHNDLAQLEEMLQMYPKSTPKLIAFESVYSMAGSVADINKICDLAEKYGALTFLDEVHAVGLYGPHGAGVAEHCDFEAHRVAGIATPPQGDNGRLRTVMDRVDMITGTLGKSFGTVGGYVAASSKLIDWVRSYAPGFIFTTTLPPAVMAGAAEAIRFQRSHLNLRQDQQRHTAYVKKGLHDLGIPVIPNPSHIVPVLIGNPDLAKQASDILMEKHRIYVQAINFPTVSRGTERLRITPTPGHTNDLSDILIAAVDDVFNELQLPRIRDWEMQGGLLGVGDKNFVPEPNLWTEEQLSFSNEDLNSNVFEPVIDQLEVSSGVKL.

The transit peptide at 1–26 (MFRPVLKVRPSFSYPYSIVSSRSVRL) directs the protein to the mitochondrion. Residues Arg73, Ser186, and Lys205 each coordinate substrate. 3 residues coordinate pyridoxal 5'-phosphate: Ser238, His266, and Thr316. The active site involves Lys319. Residue Lys319 is modified to N6-(pyridoxal phosphate)lysine. Positions 348 and 349 each coordinate pyridoxal 5'-phosphate. Substrate is bound at residue Thr434.

This sequence belongs to the class-II pyridoxal-phosphate-dependent aminotransferase family. In terms of assembly, homodimer. It depends on pyridoxal 5'-phosphate as a cofactor.

Its subcellular location is the mitochondrion matrix. The enzyme catalyses succinyl-CoA + glycine + H(+) = 5-aminolevulinate + CO2 + CoA. It participates in porphyrin-containing compound metabolism; protoporphyrin-IX biosynthesis; 5-aminolevulinate from glycine: step 1/1. In terms of biological role, catalyzes the synthesis of 5-aminolevulinate (ALA) from succinyl-CoA and glycine, the first and rate-limiting step in heme biosynthesis. The sequence is that of 5-aminolevulinate synthase, mitochondrial (HEM1) from Candida glabrata (strain ATCC 2001 / BCRC 20586 / JCM 3761 / NBRC 0622 / NRRL Y-65 / CBS 138) (Yeast).